The primary structure comprises 240 residues: Bidirectional sugar transporter SWEET5 (240 aa).

At 1–9 (MTDPHTART) the chain is on the extracellular side. A helical transmembrane segment spans residues 10–30 (IVGIVGNVISFGLFCAPIPTM). One can recognise a MtN3/slv 1 domain in the interval 10–95 (IVGIVGNVIS…YVTIFFVFAT (86 aa)). Residues 31–45 (VKIWKMKSVSEFKPD) are Cytoplasmic-facing. The chain crosses the membrane as a helical span at residues 46 to 66 (PYVATVLNCMMWTFYGLPFVQ). The Extracellular segment spans residues 67–72 (PDSLLV). The helical transmembrane segment at 73–93 (ITINGTGLFMELVYVTIFFVF) threads the bilayer. The Cytoplasmic segment spans residues 94-103 (ATSPVRRKIT). The chain crosses the membrane as a helical span at residues 104-124 (IAMVIEVIFMAVVIFCTMYFL). The Extracellular segment spans residues 125–131 (HTTKQRS). A helical membrane pass occupies residues 132-152 (MLIGILCIVFNVIMYAAPLTV). Residues 133–217 (LIGILCIVFN…IIYITYYKTT (85 aa)) enclose the MtN3/slv 2 domain. Residues 153–165 (MKLVIKTKSVKYM) lie on the Cytoplasmic side of the membrane. A helical transmembrane segment spans residues 166–186 (PFFLSLANFMNGVVWVIYACL). Over 187–190 (KFDP) the chain is Extracellular. A helical transmembrane segment spans residues 191–211 (YILIPNGLGSLSGIIQLIIYI). Residues 212-240 (TYYKTTNWNDDDEDKEKRYSNAGIELGQA) are Cytoplasmic-facing.

It belongs to the SWEET sugar transporter family. As to quaternary structure, forms homooligomers and heterooligomers with SWEET6, SWEET8, SWEET9, SWEET11 and SWEET12.

Its subcellular location is the cell membrane. Functionally, mediates both low-affinity uptake and efflux of sugar across the plasma membrane. May play roles in nurturing the male gametophyte. The chain is Bidirectional sugar transporter SWEET5 from Arabidopsis thaliana (Mouse-ear cress).